The primary structure comprises 98 residues: NADH-ubiquinone oxidoreductase chain 4L (98 aa).

3 consecutive transmembrane segments (helical) span residues 1 to 21 (MSMVYFNIFLAFIVSLVGLLM), 29 to 49 (SLLCLEGMMLSLFVMMSVTIL), and 61 to 81 (IILLVFAACEAALGLSLLVMV).

The protein belongs to the complex I subunit 4L family. As to quaternary structure, core subunit of respiratory chain NADH dehydrogenase (Complex I) which is composed of 45 different subunits.

It localises to the mitochondrion inner membrane. It carries out the reaction a ubiquinone + NADH + 5 H(+)(in) = a ubiquinol + NAD(+) + 4 H(+)(out). In terms of biological role, core subunit of the mitochondrial membrane respiratory chain NADH dehydrogenase (Complex I) which catalyzes electron transfer from NADH through the respiratory chain, using ubiquinone as an electron acceptor. Part of the enzyme membrane arm which is embedded in the lipid bilayer and involved in proton translocation. This Callorhinus ursinus (Northern fur seal) protein is NADH-ubiquinone oxidoreductase chain 4L (MT-ND4L).